Reading from the N-terminus, the 528-residue chain is Peptide chain release factor 3 (528 aa).

The region spanning 10–279 (AKRRTFAIIS…GLVEWAPAPM (270 aa)) is the tr-type G domain. Residues 19–26 (SHPDAGKT), 87–91 (DTPGH), and 141–144 (NKLD) each bind GTP.

This sequence belongs to the TRAFAC class translation factor GTPase superfamily. Classic translation factor GTPase family. PrfC subfamily.

The protein localises to the cytoplasm. Increases the formation of ribosomal termination complexes and stimulates activities of RF-1 and RF-2. It binds guanine nucleotides and has strong preference for UGA stop codons. It may interact directly with the ribosome. The stimulation of RF-1 and RF-2 is significantly reduced by GTP and GDP, but not by GMP. In Escherichia coli O1:K1 / APEC, this protein is Peptide chain release factor 3.